The sequence spans 363 residues: DNA primase small subunit PriS (363 aa).

Residues aspartate 105, aspartate 107, and aspartate 265 contribute to the active site.

It belongs to the eukaryotic-type primase small subunit family. Heterodimer of a small subunit (PriS) and a large subunit (PriL). The cofactor is Mg(2+). It depends on Mn(2+) as a cofactor.

In terms of biological role, catalytic subunit of DNA primase, an RNA polymerase that catalyzes the synthesis of short RNA molecules used as primers for DNA polymerase during DNA replication. The small subunit contains the primase catalytic core and has DNA synthesis activity on its own. Binding to the large subunit stabilizes and modulates the activity, increasing the rate of DNA synthesis while decreasing the length of the DNA fragments, and conferring RNA synthesis capability. The DNA polymerase activity may enable DNA primase to also catalyze primer extension after primer synthesis. May also play a role in DNA repair. The polypeptide is DNA primase small subunit PriS (Methanococcus maripaludis (strain C7 / ATCC BAA-1331)).